A 207-amino-acid polypeptide reads, in one-letter code: Large ribosomal subunit protein bL25 (207 aa).

Residues 1–20 (MANHQIKAQRRKDEGKGASR) are disordered.

Belongs to the bacterial ribosomal protein bL25 family. CTC subfamily. In terms of assembly, part of the 50S ribosomal subunit; part of the 5S rRNA/L5/L18/L25 subcomplex. Contacts the 5S rRNA. Binds to the 5S rRNA independently of L5 and L18.

In terms of biological role, this is one of the proteins that binds to the 5S RNA in the ribosome where it forms part of the central protuberance. This chain is Large ribosomal subunit protein bL25, found in Xylella fastidiosa (strain M23).